Consider the following 421-residue polypeptide: Serine hydroxymethyltransferase (421 aa).

(6S)-5,6,7,8-tetrahydrofolate contacts are provided by residues Leu121 and 125-127 (GHL). Lys230 is subject to N6-(pyridoxal phosphate)lysine. (6S)-5,6,7,8-tetrahydrofolate is bound by residues Glu246 and 354–356 (SPF).

It belongs to the SHMT family. In terms of assembly, homodimer. Pyridoxal 5'-phosphate serves as cofactor.

The protein resides in the cytoplasm. It catalyses the reaction (6R)-5,10-methylene-5,6,7,8-tetrahydrofolate + glycine + H2O = (6S)-5,6,7,8-tetrahydrofolate + L-serine. It functions in the pathway one-carbon metabolism; tetrahydrofolate interconversion. The protein operates within amino-acid biosynthesis; glycine biosynthesis; glycine from L-serine: step 1/1. Functionally, catalyzes the reversible interconversion of serine and glycine with tetrahydrofolate (THF) serving as the one-carbon carrier. This reaction serves as the major source of one-carbon groups required for the biosynthesis of purines, thymidylate, methionine, and other important biomolecules. Also exhibits THF-independent aldolase activity toward beta-hydroxyamino acids, producing glycine and aldehydes, via a retro-aldol mechanism. This Rickettsia felis (strain ATCC VR-1525 / URRWXCal2) (Rickettsia azadi) protein is Serine hydroxymethyltransferase.